Here is a 134-residue protein sequence, read N- to C-terminus: T-cell receptor alpha chain V region RL-5 (134 aa).

The N-terminal stretch at 1–20 is a signal peptide; it reads MFSASCSVTVVVLLITVRRT. The v segment stretch occupies residues 21–114; it reads NGASVTQTEG…DSAVYYCALR (94 aa). Residues 115-134 form a j segment region; that stretch reads RGASNKLTLGTGTLLKVELN. N-linked (GlcNAc...) asparagine glycosylation occurs at Asn134.

Post-translationally, rearrangement with the C region would elongate the sequence with Ile-Thr-; which creates a potential N-glycosylation site at Asn-134.

The protein is T-cell receptor alpha chain V region RL-5 of Oryctolagus cuniculus (Rabbit).